A 192-amino-acid polypeptide reads, in one-letter code: MIGRLTGILAEKNPPQIVLDVNGVGYELDVPMSTFYNLPAAGEKTKLLTHFAVREDGHYLYGFLTEAERFAFRQLLKVSGIGARTALSVLSGLSVGDLAAAVAQQELGRLIKIPGIGKKTAERLLLELKGKLADATGVSLHPAVDDSKQDISNALLALGYNEKEAASAMKQLPADVSTSDGIRAALKLLSKV.

Residues 1-64 form a domain I region; sequence MIGRLTGILA…EDGHYLYGFL (64 aa). The segment at 65–143 is domain II; it reads TEAERFAFRQ…DATGVSLHPA (79 aa). Residues 144–149 are flexible linker; sequence VDDSKQ. Residues 149 to 192 form a domain III region; that stretch reads QDISNALLALGYNEKEAASAMKQLPADVSTSDGIRAALKLLSKV.

Belongs to the RuvA family. Homotetramer. Forms an RuvA(8)-RuvB(12)-Holliday junction (HJ) complex. HJ DNA is sandwiched between 2 RuvA tetramers; dsDNA enters through RuvA and exits via RuvB. An RuvB hexamer assembles on each DNA strand where it exits the tetramer. Each RuvB hexamer is contacted by two RuvA subunits (via domain III) on 2 adjacent RuvB subunits; this complex drives branch migration. In the full resolvosome a probable DNA-RuvA(4)-RuvB(12)-RuvC(2) complex forms which resolves the HJ.

It is found in the cytoplasm. In terms of biological role, the RuvA-RuvB-RuvC complex processes Holliday junction (HJ) DNA during genetic recombination and DNA repair, while the RuvA-RuvB complex plays an important role in the rescue of blocked DNA replication forks via replication fork reversal (RFR). RuvA specifically binds to HJ cruciform DNA, conferring on it an open structure. The RuvB hexamer acts as an ATP-dependent pump, pulling dsDNA into and through the RuvAB complex. HJ branch migration allows RuvC to scan DNA until it finds its consensus sequence, where it cleaves and resolves the cruciform DNA. The sequence is that of Holliday junction branch migration complex subunit RuvA from Dechloromonas aromatica (strain RCB).